The primary structure comprises 378 residues: UDP-N-acetylglucosamine 2-epimerase (378 aa).

His-214 is an active-site residue.

The protein belongs to the UDP-N-acetylglucosamine 2-epimerase family.

It catalyses the reaction UDP-N-acetyl-alpha-D-glucosamine = UDP-N-acetyl-alpha-D-mannosamine. The protein operates within bacterial outer membrane biogenesis; LPS O-antigen biosynthesis. This chain is UDP-N-acetylglucosamine 2-epimerase (rfbC), found in Salmonella borreze.